Consider the following 311-residue polypeptide: T-cell immunomodulatory protein (311 aa).

3 N-linked (GlcNAc...) asparagine glycosylation sites follow: asparagine 52, asparagine 70, and asparagine 181. A helical transmembrane segment spans residues 266–286 (VLLTAIALIGVCVFILAIIGI).

It belongs to the TIP family. In terms of assembly, interacts with RUVBL1, RUVBL2 and alpha-tubulin.

It localises to the secreted. It is found in the cell membrane. Functionally, modulator of T-cell function. Has a protective effect in graft versus host disease model. The sequence is that of T-cell immunomodulatory protein from Macaca fascicularis (Crab-eating macaque).